The following is a 202-amino-acid chain: Probable nicotinate-nucleotide adenylyltransferase (202 aa).

It belongs to the NadD family.

It carries out the reaction nicotinate beta-D-ribonucleotide + ATP + H(+) = deamido-NAD(+) + diphosphate. The protein operates within cofactor biosynthesis; NAD(+) biosynthesis; deamido-NAD(+) from nicotinate D-ribonucleotide: step 1/1. Its function is as follows. Catalyzes the reversible adenylation of nicotinate mononucleotide (NaMN) to nicotinic acid adenine dinucleotide (NaAD). This Clostridium perfringens (strain ATCC 13124 / DSM 756 / JCM 1290 / NCIMB 6125 / NCTC 8237 / Type A) protein is Probable nicotinate-nucleotide adenylyltransferase.